The sequence spans 688 residues: Transcriptional regulatory protein GAT1 (688 aa).

Disordered regions lie at residues 83 to 125 (NHNS…SPMI), 259 to 278 (TSAS…NNSS), 343 to 438 (FTGI…GVSC), 482 to 565 (IKKR…NLDK), and 639 to 678 (LMTM…TANN). The segment covering 259–271 (TSASITSPTSTFS) has biased composition (low complexity). Residues 359–368 (FDNKPKDDHF) show a composition bias toward basic and acidic residues. Polar residues predominate over residues 369-379 (NTSLSVSQQQP). Residues 382-397 (KKSKRKSTITKSKKKA) are compositionally biased toward basic residues. A compositionally biased stretch (low complexity) spans 402 to 428 (TTITSTGSTITTKSTNSNSTGKGTATG). A GATA-type zinc finger spans residues 438–462 (CTNCGTKTTPLWRRNPQGQPLCNAC). Low complexity-rich tracts occupy residues 488 to 510 (GNNN…NNKS), 529 to 543 (TNNT…SKSP), 552 to 565 (FDNN…NLDK), 639 to 654 (LMTM…LSTT), and 662 to 678 (NNEG…TANN).

It localises to the nucleus. Transcriptional regulator of nitrogen utilization required for nitrogen catabolite repression and utilization of isoleucine, tyrosine and tryptophan as nitrogen sources. Controls expression of the MEP2 ammonium permease, the DUR1,2 urea amidolyase, and the transcription factor STP1, which in turn mediates SAP2 expression, a long-known virulence attribute of C.albicans. Influences the filamentation process depending upon the nitrogen sources available. Required for virulence in a mouse systemic infection model. This Candida albicans (strain SC5314 / ATCC MYA-2876) (Yeast) protein is Transcriptional regulatory protein GAT1 (GAT1).